Consider the following 177-residue polypeptide: uncharacterized protein (177 aa).

In terms of domain architecture, N-acetyltransferase spans 10-177; it reads LILRQITDQD…NVYSIVKPRE (168 aa).

Belongs to the acetyltransferase family.

This is an uncharacterized protein from Bacillus subtilis (strain 168).